The chain runs to 1207 residues: AP-3 complex subunit delta-1 (1207 aa).

Ala2 is subject to N-acetylalanine. HEAT repeat units lie at residues 34–71 (KYIS…LGYD), 142–179 (DLAR…KYPE), 180–216 (SLRP…RNPK), 218–254 (YLSL…LEPR), 257–296 (KKLI…GMPN), 298–336 (SASI…THPK), 337–373 (SVQA…KKNL), 375–409 (EIVK…QSNY), and 521–558 (VYVQ…ERLP). 2 disordered regions span residues 630–695 (PLSD…RYQD) and 731–970 (RRHR…EEPL). Phosphoserine is present on residues Ser632, Ser634, and Ser636. Basic and acidic residues predominate over residues 648 to 675 (EEQRHTKPRAPEADEQELARRREARRQE). The stretch at 659–679 (EADEQELARRREARRQEQANN) forms a coiled coil. Phosphoserine is present on Ser688. Positions 725–752 (VKLEEERRHRQRLEKDKRKKKKRERERR) form a coiled coil. Residues 731–740 (RRHRQRLEKD) are compositionally biased toward basic and acidic residues. Over residues 741-759 (KRKKKKRERERRGTRRHSS) the composition is skewed to basic residues. Ser758 and Ser759 each carry phosphoserine. Residue Thr762 is modified to Phosphothreonine. 3 positions are modified to phosphoserine: Ser764, Ser788, and Ser829. Residues 777–794 (VTEEMPENALPSDEDDKD) are compositionally biased toward acidic residues. Basic and acidic residues predominate over residues 795-840 (PNDPYRALDIDLDKPLADSEKLPVQKHRNAETSKSPEKEDVPLVEK). Basic residues predominate over residues 841-854 (KSKKPKKKEKKHKE). Residues 846–870 (KKKEKKHKEKEREKKKKEVEKGEDL) are a coiled coil. Basic and acidic residues-rich tracts occupy residues 855 to 869 (KERE…KGED) and 899 to 908 (EGQEEPRGEE). Basic residues predominate over residues 923-933 (PSKHKKKKHKK). A compositionally biased stretch (acidic residues) spans 952-969 (ADEEAAEPVENGTLEEEP).

The protein belongs to the adaptor complexes large subunit family. In terms of assembly, AP-3 associates with the BLOC-1 complex. Adaptor protein complex 3 (AP-3) is a heterotetramer composed of two large adaptins (delta-type subunit AP3D1 and beta-type subunit AP3B1 or AP3B2), a medium adaptin (mu-type subunit AP3M1 or AP3M2) and a small adaptin (sigma-type subunit APS1 or AP3S2). Interacts with SLC30A2. Interacts with CLN3 (via dileucine motif); this interaction facilitates lysosomal targeting.

It localises to the cytoplasm. It is found in the golgi apparatus membrane. Functionally, part of the AP-3 complex, an adaptor-related complex which is not clathrin-associated. The complex is associated with the Golgi region as well as more peripheral structures. It facilitates the budding of vesicles from the Golgi membrane and may be directly involved in trafficking to lysosomes. Involved in process of CD8+ T-cell and NK cell degranulation. In concert with the BLOC-1 complex, AP-3 is required to target cargos into vesicles assembled at cell bodies for delivery into neurites and nerve terminals. The chain is AP-3 complex subunit delta-1 (AP3D1) from Bos taurus (Bovine).